The following is a 1070-amino-acid chain: DNA-directed RNA polymerase subunit beta (1070 aa).

This sequence belongs to the RNA polymerase beta chain family. In terms of assembly, in plastids the minimal PEP RNA polymerase catalytic core is composed of four subunits: alpha, beta, beta', and beta''. When a (nuclear-encoded) sigma factor is associated with the core the holoenzyme is formed, which can initiate transcription.

Its subcellular location is the plastid. It is found in the chloroplast. The catalysed reaction is RNA(n) + a ribonucleoside 5'-triphosphate = RNA(n+1) + diphosphate. In terms of biological role, DNA-dependent RNA polymerase catalyzes the transcription of DNA into RNA using the four ribonucleoside triphosphates as substrates. This is DNA-directed RNA polymerase subunit beta from Phalaenopsis aphrodite subsp. formosana (Moth orchid).